The primary structure comprises 332 residues: L-lactate dehydrogenase A chain (332 aa).

NAD(+)-binding positions include 29–57 (GMVG…MEDK) and arginine 99. Substrate contacts are provided by arginine 106, asparagine 138, and arginine 169. Asparagine 138 serves as a coordination point for NAD(+). Histidine 193 serves as the catalytic Proton acceptor. A substrate-binding site is contributed by threonine 248.

This sequence belongs to the LDH/MDH superfamily. LDH family. As to quaternary structure, homotetramer.

The protein localises to the cytoplasm. It catalyses the reaction (S)-lactate + NAD(+) = pyruvate + NADH + H(+). It functions in the pathway fermentation; pyruvate fermentation to lactate; (S)-lactate from pyruvate: step 1/1. Interconverts simultaneously and stereospecifically pyruvate and lactate with concomitant interconversion of NADH and NAD(+). The protein is L-lactate dehydrogenase A chain (ldha) of Gillichthys seta (Shortjaw mudsucker).